A 32-amino-acid chain; its full sequence is Acyclotide phyb-M (32 aa).

Glutamine 1 is subject to Pyrrolidone carboxylic acid. 3 disulfides stabilise this stretch: cysteine 5-cysteine 21, cysteine 9-cysteine 23, and cysteine 14-cysteine 28.

Contains 3 disulfide bonds. In terms of tissue distribution, expressed in midvein, lamina and periphery of leaves (at protein level).

Its function is as follows. Probably participates in a plant defense mechanism. This Petunia hybrida (Petunia) protein is Acyclotide phyb-M.